The chain runs to 448 residues: MTTILKGLPTGEKVGIAFSGGLDTSAALLWMKQKGARCFAYTANLGQPDESDYDEIPRKAMSFGAEKARLVDCRTQLVHEGIAAIQSGAFHISTGGATYFNTTPLGRAVTGTMLVAAMKEDGVNIWGDGSTYKGNDIERFYRYGLLTNPNLKIYKPWLDQQFIDELGGRAEMSAFLTAHGFNYKMSAEKAYSTDSNLLGATHEAKDLESLSSGIRIVNPIMGVPFWREDCAVRPETVVVRFEEGQPVALNGQTFTDPVALFLEANAIGGRHGLGMCDQIENRIIEAKSRGIYEAPGMALLHIAYERLVTGIHNEDTIEQYRMSGMKLGRLLYQGRWFDSQALMLRETAQRWVASAITGEVTLELRRGNDYSLLNTESPNLTYQPERLSMEKVEDAAFTPADRIGQLTMRNLDITDTRTKLKLYSDTGLLSGAEGAQIFQLGHDKGDKS.

ATP contacts are provided by residues 17-25 and A43; that span reads AFSGGLDTS. Y99 provides a ligand contact to L-citrulline. Positions 129 and 131 each coordinate ATP. L-aspartate-binding residues include T131, N135, and D136. N135 contacts L-citrulline. D136 provides a ligand contact to ATP. L-citrulline contacts are provided by R139 and S192. Residue D194 coordinates ATP. Residues T201, E203, and E280 each contribute to the L-citrulline site.

It belongs to the argininosuccinate synthase family. Type 2 subfamily. Homotetramer.

The protein localises to the cytoplasm. It catalyses the reaction L-citrulline + L-aspartate + ATP = 2-(N(omega)-L-arginino)succinate + AMP + diphosphate + H(+). It participates in amino-acid biosynthesis; L-arginine biosynthesis; L-arginine from L-ornithine and carbamoyl phosphate: step 2/3. The sequence is that of Argininosuccinate synthase from Bradyrhizobium sp. (strain ORS 278).